A 286-amino-acid polypeptide reads, in one-letter code: 3-hydroxyanthranilate 3,4-dioxygenase (286 aa).

The segment at 1–160 (MERRVRVKSW…SEQYRTGKPN (160 aa)) is domain A (catalytic). Arg-43 is a binding site for O2. Residues His-47, Glu-53, and His-91 each coordinate Fe cation. Substrate is bound at residue Glu-53. Substrate contacts are provided by Arg-95 and Glu-105. Residues 161-177 (PDQLLKELPFPLNTRSI) are linker. The tract at residues 178–286 (MKPMSLKAWL…QDPARKKPWW (109 aa)) is domain B.

This sequence belongs to the 3-HAO family. Monomer. The cofactor is Fe(2+).

The protein localises to the cytoplasm. Its subcellular location is the cytosol. The enzyme catalyses 3-hydroxyanthranilate + O2 = (2Z,4Z)-2-amino-3-carboxymuconate 6-semialdehyde. It functions in the pathway cofactor biosynthesis; NAD(+) biosynthesis; quinolinate from L-kynurenine: step 3/3. Its function is as follows. Catalyzes the oxidative ring opening of 3-hydroxyanthranilate to 2-amino-3-carboxymuconate semialdehyde, which spontaneously cyclizes to quinolinate. In Mus musculus (Mouse), this protein is 3-hydroxyanthranilate 3,4-dioxygenase (Haao).